A 180-amino-acid polypeptide reads, in one-letter code: Protein SPO16 homolog (180 aa).

Homooligomer. Interacts with SHOC, SYCP1 and SYCE3.

Its subcellular location is the chromosome. In terms of biological role, plays a key role in reinforcing the integrity of the central element of the synaptonemal complex (SC) thereby stabilizing SC, ensuring progression of meiotic prophase I in male and female germ cells. Promotes homologous recombination and crossing-over in meiotic prophase I via its association with SHOC1. Required for the localization of TEX11 and MSH4 to recombination intermediates. The protein is Protein SPO16 homolog of Homo sapiens (Human).